The following is a 379-amino-acid chain: UDP-4-amino-4-deoxy-L-arabinose--oxoglutarate aminotransferase (379 aa).

K182 carries the post-translational modification N6-(pyridoxal phosphate)lysine.

It belongs to the DegT/DnrJ/EryC1 family. ArnB subfamily. In terms of assembly, homodimer. Requires pyridoxal 5'-phosphate as cofactor.

It carries out the reaction UDP-4-amino-4-deoxy-beta-L-arabinose + 2-oxoglutarate = UDP-beta-L-threo-pentopyranos-4-ulose + L-glutamate. The protein operates within nucleotide-sugar biosynthesis; UDP-4-deoxy-4-formamido-beta-L-arabinose biosynthesis; UDP-4-deoxy-4-formamido-beta-L-arabinose from UDP-alpha-D-glucuronate: step 2/3. Its pathway is bacterial outer membrane biogenesis; lipopolysaccharide biosynthesis. Catalyzes the conversion of UDP-4-keto-arabinose (UDP-Ara4O) to UDP-4-amino-4-deoxy-L-arabinose (UDP-L-Ara4N). The modified arabinose is attached to lipid A and is required for resistance to polymyxin and cationic antimicrobial peptides. The protein is UDP-4-amino-4-deoxy-L-arabinose--oxoglutarate aminotransferase of Erwinia tasmaniensis (strain DSM 17950 / CFBP 7177 / CIP 109463 / NCPPB 4357 / Et1/99).